We begin with the raw amino-acid sequence, 182 residues long: MHLIVGLGNPGSQYELTHHNIGFIVVDTICKYWNFHSFSKKADYLITSGIINDNKIMLIKPYSFMNNSGIPVAKIQNFYKLSLDNIVVIHDDADLELGRIKVKKGGSSAGHNGLKSIDSFIGNDYWRLRFGVGRPEDQRSLADYVLSKFSNFYNVTPLVEKIAKNIHLMLQGDNTAFINLIV.

TRNA is bound at residue Y14. H19 acts as the Proton acceptor in catalysis. The tRNA site is built by F64, N66, and N112.

It belongs to the PTH family. Monomer.

It localises to the cytoplasm. It catalyses the reaction an N-acyl-L-alpha-aminoacyl-tRNA + H2O = an N-acyl-L-amino acid + a tRNA + H(+). In terms of biological role, hydrolyzes ribosome-free peptidyl-tRNAs (with 1 or more amino acids incorporated), which drop off the ribosome during protein synthesis, or as a result of ribosome stalling. Catalyzes the release of premature peptidyl moieties from peptidyl-tRNA molecules trapped in stalled 50S ribosomal subunits, and thus maintains levels of free tRNAs and 50S ribosomes. This is Peptidyl-tRNA hydrolase from Wolbachia pipientis wMel.